The sequence spans 193 residues: Ion-translocating oxidoreductase complex subunit A (193 aa).

A run of 6 helical transmembrane segments spans residues 5–25, 39–59, 62–82, 102–122, 134–154, and 171–191; these read LLLFVGTVLVNNFVLVKFLGL, IGMGFATTFVMTIASISSWLM, FILVPLDLLYLRTLSFILVIA, LLGIFLPLITTNCAVLGVALL, AVYGFGAAVGFSLVMVLFAAI, and SIGLITAGLMSLAFMGFSGLV.

This sequence belongs to the NqrDE/RnfAE family. In terms of assembly, the complex is composed of six subunits: RnfA, RnfB, RnfC, RnfD, RnfE and RnfG.

The protein localises to the cell inner membrane. Its function is as follows. Part of a membrane-bound complex that couples electron transfer with translocation of ions across the membrane. This Proteus mirabilis (strain HI4320) protein is Ion-translocating oxidoreductase complex subunit A.